We begin with the raw amino-acid sequence, 887 residues long: Alanine--tRNA ligase (887 aa).

Histidine 581, histidine 585, cysteine 683, and histidine 687 together coordinate Zn(2+).

The protein belongs to the class-II aminoacyl-tRNA synthetase family. Zn(2+) serves as cofactor.

The protein localises to the cytoplasm. It carries out the reaction tRNA(Ala) + L-alanine + ATP = L-alanyl-tRNA(Ala) + AMP + diphosphate. In terms of biological role, catalyzes the attachment of alanine to tRNA(Ala) in a two-step reaction: alanine is first activated by ATP to form Ala-AMP and then transferred to the acceptor end of tRNA(Ala). Also edits incorrectly charged Ser-tRNA(Ala) and Gly-tRNA(Ala) via its editing domain. The polypeptide is Alanine--tRNA ligase (Ehrlichia ruminantium (strain Welgevonden)).